Consider the following 598-residue polypeptide: Nuclear receptor subfamily 4 group A member 2 (598 aa).

The segment at 1 to 22 (MPCVQAQYGSSPQGASPASQSY) is disordered. Over residues 8–22 (YGSSPQGASPASQSY) the composition is skewed to low complexity. The segment at residues 260–335 (EGLCAVCGDN…VGMVKEVVRT (76 aa)) is a DNA-binding region (nuclear receptor). 2 consecutive NR C4-type zinc fingers follow at residues 263–283 (CAVC…CEGC) and 299–318 (CLAN…CQYC). The Bipartite nuclear localization signal (NLS1) signature appears at 287–314 (FKRTVQKNAKYVCLANKNCPVDKRRRNR). The segment at 337–361 (SLKGRRGRLPSKPKSPQEPSPPSPP) is disordered. Positions 338-350 (LKGRRGRLPSKPK) match the Nuclear localization signal (NLS1) motif. Over residues 352-361 (PQEPSPPSPP) the composition is skewed to pro residues. Residues 360–595 (PPVSLISALV…AIIDKLFLDT (236 aa)) form the NR LBD domain. The nuclear export sequence (NES1) signature appears at 443-452 (FLELFVLRLA). A nuclear export sequence (NES2) motif is present at residues 568 to 577 (QGLQRIFYLK).

This sequence belongs to the nuclear hormone receptor family. NR4 subfamily. As to quaternary structure, interacts with SFPQ, NCOR2, SIN3A and HADC1. The interaction with NCOR2 increases in the absence of PITX3. Interacts with PER2.

Its subcellular location is the cytoplasm. It is found in the nucleus. Transcriptional regulator which is important for the differentiation and maintenance of meso-diencephalic dopaminergic (mdDA) neurons during development. It is crucial for expression of a set of genes such as SLC6A3, SLC18A2, TH and DRD2 which are essential for development of mdDA neurons. The polypeptide is Nuclear receptor subfamily 4 group A member 2 (NR4A2) (Bos taurus (Bovine)).